The following is a 197-amino-acid chain: Probable chemoreceptor glutamine deamidase CheD 2 (197 aa).

This sequence belongs to the CheD family.

It catalyses the reaction L-glutaminyl-[protein] + H2O = L-glutamyl-[protein] + NH4(+). Functionally, probably deamidates glutamine residues to glutamate on methyl-accepting chemotaxis receptors (MCPs), playing an important role in chemotaxis. The chain is Probable chemoreceptor glutamine deamidase CheD 2 from Dechloromonas aromatica (strain RCB).